The chain runs to 66 residues: Beta-defensin 107A (66 aa).

Positions 1–22 (MKIFFFIFAALILLAQIFQART) are cleaved as a signal peptide. 2 cysteine pairs are disulfide-bonded: Cys37–Cys51 and Cys41–Cys60.

This sequence belongs to the beta-defensin family.

It localises to the secreted. Its function is as follows. Has antibacterial activity. This Hylobates lar (Lar gibbon) protein is Beta-defensin 107A (DEFB107A).